Consider the following 379-residue polypeptide: Queuine tRNA-ribosyltransferase (379 aa).

Aspartate 94 acts as the Proton acceptor in catalysis. Substrate contacts are provided by residues 94–98, aspartate 148, glutamine 191, and glycine 218; that span reads DSGGF. Residues 249–255 form an RNA binding region; it reads GVGSPDS. Catalysis depends on aspartate 268, which acts as the Nucleophile. The tract at residues 273 to 277 is RNA binding; important for wobble base 34 recognition; it reads TRIAR. The Zn(2+) site is built by cysteine 306, cysteine 308, cysteine 311, and histidine 337.

It belongs to the queuine tRNA-ribosyltransferase family. As to quaternary structure, homodimer. Within each dimer, one monomer is responsible for RNA recognition and catalysis, while the other monomer binds to the replacement base PreQ1. Zn(2+) serves as cofactor.

The enzyme catalyses 7-aminomethyl-7-carbaguanine + guanosine(34) in tRNA = 7-aminomethyl-7-carbaguanosine(34) in tRNA + guanine. It functions in the pathway tRNA modification; tRNA-queuosine biosynthesis. Functionally, catalyzes the base-exchange of a guanine (G) residue with the queuine precursor 7-aminomethyl-7-deazaguanine (PreQ1) at position 34 (anticodon wobble position) in tRNAs with GU(N) anticodons (tRNA-Asp, -Asn, -His and -Tyr). Catalysis occurs through a double-displacement mechanism. The nucleophile active site attacks the C1' of nucleotide 34 to detach the guanine base from the RNA, forming a covalent enzyme-RNA intermediate. The proton acceptor active site deprotonates the incoming PreQ1, allowing a nucleophilic attack on the C1' of the ribose to form the product. After dissociation, two additional enzymatic reactions on the tRNA convert PreQ1 to queuine (Q), resulting in the hypermodified nucleoside queuosine (7-(((4,5-cis-dihydroxy-2-cyclopenten-1-yl)amino)methyl)-7-deazaguanosine). The polypeptide is Queuine tRNA-ribosyltransferase (Listeria innocua serovar 6a (strain ATCC BAA-680 / CLIP 11262)).